Reading from the N-terminus, the 206-residue chain is Flavin prenyltransferase UbiX (206 aa).

FMN is bound by residues 11–13 (GAS), S37, 103–106 (SMST), and R138. Dimethylallyl phosphate-binding residues include Y168 and R184.

It belongs to the UbiX/PAD1 family.

The enzyme catalyses dimethylallyl phosphate + FMNH2 = prenylated FMNH2 + phosphate. In terms of biological role, flavin prenyltransferase that catalyzes the synthesis of the prenylated FMN cofactor (prenyl-FMN) for 4-hydroxy-3-polyprenylbenzoic acid decarboxylase UbiD. The prenyltransferase is metal-independent and links a dimethylallyl moiety from dimethylallyl monophosphate (DMAP) to the flavin N5 and C6 atoms of FMN. This chain is Flavin prenyltransferase UbiX, found in Synechocystis sp. (strain ATCC 27184 / PCC 6803 / Kazusa).